The primary structure comprises 450 residues: ATP-dependent protease ATPase subunit HslU (450 aa).

ATP is bound by residues Val27, 69 to 74 (GVGKTE), Asp263, Glu328, and Arg400.

This sequence belongs to the ClpX chaperone family. HslU subfamily. A double ring-shaped homohexamer of HslV is capped on each side by a ring-shaped HslU homohexamer. The assembly of the HslU/HslV complex is dependent on binding of ATP.

It localises to the cytoplasm. ATPase subunit of a proteasome-like degradation complex; this subunit has chaperone activity. The binding of ATP and its subsequent hydrolysis by HslU are essential for unfolding of protein substrates subsequently hydrolyzed by HslV. HslU recognizes the N-terminal part of its protein substrates and unfolds these before they are guided to HslV for hydrolysis. This is ATP-dependent protease ATPase subunit HslU from Aquifex aeolicus (strain VF5).